Consider the following 555-residue polypeptide: Glutamine--tRNA ligase (555 aa).

Residues 34 to 44 (PEPNGYLHIGH) carry the 'HIGH' region motif. ATP contacts are provided by residues 35–37 (EPN) and 41–47 (HIGHAKS). L-glutamine contacts are provided by Asp-67 and Tyr-212. ATP is bound by residues Thr-231, 261-262 (RL), and 269-271 (MSK). The 'KMSKS' region signature appears at 268–272 (VMSKR). The tract at residues 317 to 324 (TKQDNTIE) is interaction with tRNA.

It belongs to the class-I aminoacyl-tRNA synthetase family. In terms of assembly, monomer.

The protein localises to the cytoplasm. The enzyme catalyses tRNA(Gln) + L-glutamine + ATP = L-glutaminyl-tRNA(Gln) + AMP + diphosphate. This Salmonella paratyphi B (strain ATCC BAA-1250 / SPB7) protein is Glutamine--tRNA ligase.